A 146-amino-acid polypeptide reads, in one-letter code: UPF0178 protein BcerKBAB4_2842 (146 aa).

The protein belongs to the UPF0178 family.

This Bacillus mycoides (strain KBAB4) (Bacillus weihenstephanensis) protein is UPF0178 protein BcerKBAB4_2842.